Consider the following 303-residue polypeptide: 2-dehydropantoate 2-reductase (303 aa).

NADP(+) is bound by residues 7-12 (GCGALG), Asn98, and Ala122. Asn98 contributes to the substrate binding site. Lys176 functions as the Proton donor in the catalytic mechanism. Substrate contacts are provided by Asn180, Asn184, Asn194, and Ser244. Glu256 lines the NADP(+) pocket.

It belongs to the ketopantoate reductase family. In terms of assembly, monomer.

The protein resides in the cytoplasm. The enzyme catalyses (R)-pantoate + NADP(+) = 2-dehydropantoate + NADPH + H(+). It functions in the pathway cofactor biosynthesis; (R)-pantothenate biosynthesis; (R)-pantoate from 3-methyl-2-oxobutanoate: step 2/2. In terms of biological role, catalyzes the NADPH-dependent reduction of ketopantoate into pantoic acid. This chain is 2-dehydropantoate 2-reductase (panE), found in Escherichia coli O157:H7.